A 382-amino-acid polypeptide reads, in one-letter code: ATP phosphoribosyltransferase regulatory subunit (382 aa).

Belongs to the class-II aminoacyl-tRNA synthetase family. HisZ subfamily. As to quaternary structure, heteromultimer composed of HisG and HisZ subunits.

The protein resides in the cytoplasm. It participates in amino-acid biosynthesis; L-histidine biosynthesis; L-histidine from 5-phospho-alpha-D-ribose 1-diphosphate: step 1/9. Functionally, required for the first step of histidine biosynthesis. May allow the feedback regulation of ATP phosphoribosyltransferase activity by histidine. The protein is ATP phosphoribosyltransferase regulatory subunit of Burkholderia multivorans (strain ATCC 17616 / 249).